Consider the following 549-residue polypeptide: Glucose-6-phosphate isomerase (549 aa).

The active-site Proton donor is the Glu-355. Residues His-386 and Lys-514 contribute to the active site.

This sequence belongs to the GPI family.

It is found in the cytoplasm. The enzyme catalyses alpha-D-glucose 6-phosphate = beta-D-fructose 6-phosphate. It functions in the pathway carbohydrate biosynthesis; gluconeogenesis. It participates in carbohydrate degradation; glycolysis; D-glyceraldehyde 3-phosphate and glycerone phosphate from D-glucose: step 2/4. In terms of biological role, catalyzes the reversible isomerization of glucose-6-phosphate to fructose-6-phosphate. The sequence is that of Glucose-6-phosphate isomerase from Klebsiella pneumoniae (strain 342).